The chain runs to 428 residues: Histidine--tRNA ligase (428 aa).

This sequence belongs to the class-II aminoacyl-tRNA synthetase family. As to quaternary structure, homodimer.

The protein resides in the cytoplasm. The catalysed reaction is tRNA(His) + L-histidine + ATP = L-histidyl-tRNA(His) + AMP + diphosphate + H(+). In Lactobacillus johnsonii (strain CNCM I-12250 / La1 / NCC 533), this protein is Histidine--tRNA ligase.